The sequence spans 355 residues: Chromosomal protein D1 (355 aa).

Residue Met1 is modified to N-acetylmethionine. The tract at residues 1–355 (MEEVAVKKRG…NYNDSESVAA (355 aa)) is disordered. The a.T hook 1 DNA-binding region spans 7–14 (KKRGRPSK). Position 30 is a phosphoserine (Ser30). 2 consecutive DNA-binding regions (a.T hook) follow at residues 34–41 (KKRGRPAK) and 60–67 (KIQNDEDP). The segment covering 64 to 77 (DEDPEDEGEEDGDG) has biased composition (acidic residues). Residues Ser80, Ser88, and Ser89 each carry the phosphoserine modification. The segment at residues 94-101 (KGRGRPKS) is a DNA-binding region (a.T hook 4). 3 positions are modified to phosphoserine: Ser107, Ser109, and Ser112. Phosphothreonine is present on Thr115. Phosphoserine is present on Ser118. Residues 119–130 (AKKRKAGRPKKH) show a composition bias toward basic residues. Positions 122–129 (RKAGRPKK) form a DNA-binding region, a.T hook 5. Phosphoserine; by CK2 is present on residues Ser133 and Ser135. Positions 135–147 (SENEDDQDEDDDG) are enriched in acidic residues. Ser149, Ser150, Ser161, Ser164, and Ser170 each carry phosphoserine. Positions 155–162 (RPVGRPSA) form a DNA-binding region, a.T hook 6. Positions 174-181 (RGLGRPKK) form a DNA-binding region, a.T hook 7. The residue at position 186 (Ser186) is a Phosphoserine; by CK2. The a.T hook 8 DNA-binding region spans 196–203 (KKRGRPPQ). Position 208 is a phosphoserine (Ser208). The a.T hook 9 DNA-binding region spans 219-226 (RPRGRPKA). A compositionally biased stretch (acidic residues) spans 237 to 247 (NDDDQDDENSG). Ser246, Ser252, and Ser253 each carry phosphoserine. 2 DNA-binding regions (a.T hook) span residues 262–269 (KKRGRPSL) and 281–288 (KPRSRPAK). 2 positions are modified to phosphoserine: Ser299 and Ser307. Positions 307–318 (SKKESNDEDRAV) are enriched in basic and acidic residues. At Ser311 the chain carries Phosphoserine; by CK2. The residue at position 321 (Thr321) is a Phosphothreonine. Ser332 carries the post-translational modification Phosphoserine; by CK2. The segment covering 345–355 (DNYNDSESVAA) has biased composition (polar residues).

Its subcellular location is the nucleus. It localises to the chromosome. Functionally, this satellite DNA-associated protein is a double-stranded DNA binding protein specific for tracts of pure at DNA. It may play a role in organizing the higher-order structure of euchromatin as well as heterochromatin. The chain is Chromosomal protein D1 (D1) from Drosophila melanogaster (Fruit fly).